Consider the following 249-residue polypeptide: MNKKESILREFALLCYFFIVYLLLPKNAKHPLADKSFLDPHPVARVSPFGSRPPFLLMVPSTSVPNASLESGQSSTISPRRQKESSIPVLQASGSVSANKTFQSTESSALHQPKSSSSERTGKIITRQRPHSGPTSPRVTPGELLPTLEALKLQEALDFAQLKLKTRQVRYTINLRSQKLLDTICELNDEKRAEVEEQAAYIFTLQKELVETGYEKVSSYNFTYSRLKQKAEELKYASKKEVAQLVNSL.

Polar residues-rich tracts occupy residues 66 to 79 (NASL…TISP) and 92 to 119 (ASGS…SSSE). A disordered region spans residues 66–142 (NASLESGQSS…GPTSPRVTPG (77 aa)).

Its subcellular location is the plastid. The protein resides in the chloroplast. This is an uncharacterized protein from Chlorella vulgaris (Green alga).